Here is a 145-residue protein sequence, read N- to C-terminus: Basic phospholipase A2 PC16 (145 aa).

Residues 1–21 form the signal peptide; it reads MYPAHLLLLLAVCVSLLGASA. Residues 22–27 constitute a propeptide that is removed on maturation; the sequence is IPPLPL. 7 disulfide bridges follow: cysteine 38–cysteine 98, cysteine 54–cysteine 144, cysteine 56–cysteine 72, cysteine 71–cysteine 125, cysteine 78–cysteine 118, cysteine 87–cysteine 111, and cysteine 105–cysteine 116. Ca(2+) is bound by residues tyrosine 55, glycine 57, and glycine 59. Histidine 75 is an active-site residue. Aspartate 76 is a binding site for Ca(2+). The active site involves aspartate 119.

Belongs to the phospholipase A2 family. Group I subfamily. D49 sub-subfamily. Ca(2+) is required as a cofactor.

It is found in the secreted. It carries out the reaction a 1,2-diacyl-sn-glycero-3-phosphocholine + H2O = a 1-acyl-sn-glycero-3-phosphocholine + a fatty acid + H(+). PLA2 catalyzes the calcium-dependent hydrolysis of the 2-acyl groups in 3-sn-phosphoglycerides. The polypeptide is Basic phospholipase A2 PC16 (Laticauda laticaudata (Blue-ringed sea krait)).